A 516-amino-acid polypeptide reads, in one-letter code: Flavin-dependent halogenase armH2 (516 aa).

The FAD site is built by Gly-16, Ala-19, and Glu-49. Positions 328 and 329 each coordinate chloride. Position 330 (Ile-330) interacts with FAD. The segment at 440–475 (PQANGNGAAKQDAVPAPIPVALSSGAGPEKDAKRRE) is disordered.

It belongs to the flavin-dependent halogenase family.

It catalyses the reaction melleolide F + FADH2 + chloride + O2 = 6'-chloromelleolide F + FAD + 2 H2O + H(+). Functionally, flavin-dependent halogenase involved in the biosynthesis of melleolides, a range of antifungal and phytotoxic polyketide derivatives composed of an orsellinic acid (OA) moiety esterified to various sesquiterpene alcohols. The halogenase catalyzes the transfer of a single chlorine atom to the melleolide backbone, resulting in a 6'-chloromelleolide product. The enzyme acts on free substrate and does not depend on carrier-protein-dependent acceptor molecules. This chain is Flavin-dependent halogenase armH2, found in Armillaria mellea (Honey mushroom).